Here is a 508-residue protein sequence, read N- to C-terminus: MKLAYWMYAGPAHIGTLRIASSFKNVHAIMHAPLGDDYFNVMRSMLEREQNFTPVTTSVVDRQVLSRGSQEKVVDNIVRKDGEETPDLIVLTPTCTSSILQEDLANFVDRAQMDAHCDVLLADVNHYRYNELQAGDRTLKQIVEFYIKKARKQGNLATEKTAKPSVNLIGFTTLGFHNQHDCTELKRLMADLGIEVNLILPEKATVDQLAKIPQAWFNLCPYREIGLMTAEYLQEEFAQPYVDITPMGVVETARCIRKMQQVLNQQGFDVNYEDFIQQQTRHVSQAAWFSRSIDCQNLTGKKAVVFGDNTHAAAMTKILAREMGIHVVLAGTYCKYDADWFRAEVSEYCDEVLISEDNGAIADAIARIEPAAIFGTQMERHVGKRLDIPCGVIAAPIHIQNFPLGYKPFLGYEGTNQIADLVYNSFTLGMEDHLLEIFGGHDTKEVITKGISSDSDLGWHSTAQAELNKVPGFVRGKVKRNTEKFARERGLSEITLEVMYAAKEAVGA.

Residue aspartate 36 coordinates [4Fe-4S] cluster. The Proton donor role is filled by aspartate 294. 429–430 (GM) is a substrate binding site.

It belongs to the ChlB/BchB/BchZ family. Protochlorophyllide reductase is composed of three subunits; ChlL, ChlN and ChlB. Forms a heterotetramer of two ChlB and two ChlN subunits. [4Fe-4S] cluster serves as cofactor.

It carries out the reaction chlorophyllide a + oxidized 2[4Fe-4S]-[ferredoxin] + 2 ADP + 2 phosphate = protochlorophyllide a + reduced 2[4Fe-4S]-[ferredoxin] + 2 ATP + 2 H2O. It functions in the pathway porphyrin-containing compound metabolism; chlorophyll biosynthesis (light-independent). Component of the dark-operative protochlorophyllide reductase (DPOR) that uses Mg-ATP and reduced ferredoxin to reduce ring D of protochlorophyllide (Pchlide) to form chlorophyllide a (Chlide). This reaction is light-independent. The NB-protein (ChlN-ChlB) is the catalytic component of the complex. This Synechocystis sp. (strain ATCC 27184 / PCC 6803 / Kazusa) protein is Light-independent protochlorophyllide reductase subunit B.